A 502-amino-acid chain; its full sequence is 4,4'-diapophytoene desaturase (4,4'-diaponeurosporene-forming) (502 aa).

Position 5 to 17 (5 to 17 (VIGAGVTGLAAAA)) interacts with FAD.

This sequence belongs to the carotenoid/retinoid oxidoreductase family. CrtN subfamily.

It catalyses the reaction 15-cis-4,4'-diapophytoene + 3 FAD + 3 H(+) = all-trans-4,4'-diaponeurosporene + 3 FADH2. It participates in carotenoid biosynthesis; staphyloxanthin biosynthesis; staphyloxanthin from farnesyl diphosphate: step 2/5. Its function is as follows. Involved in the biosynthesis of the yellow-orange carotenoid staphyloxanthin, which plays a role in the virulence via its protective function against oxidative stress. Catalyzes three successive dehydrogenation reactions that lead to the introduction of three double bonds into 4,4'-diapophytoene (dehydrosqualene), with 4,4'-diapophytofluene and 4,4'-diapo-zeta-carotene as intermediates, and 4,4'-diaponeurosporene (the major deep-yellow pigment in staphylococci strains) as the end product. This chain is 4,4'-diapophytoene desaturase (4,4'-diaponeurosporene-forming), found in Staphylococcus aureus (strain MRSA252).